Reading from the N-terminus, the 319-residue chain is Beta-ketoacyl-[acyl-carrier-protein] synthase III (319 aa).

Residues Cys-114 and His-246 contribute to the active site. The interval 247 to 251 (QANIR) is ACP-binding. Asn-276 is an active-site residue.

Belongs to the thiolase-like superfamily. FabH family. Homodimer.

It is found in the cytoplasm. The catalysed reaction is malonyl-[ACP] + acetyl-CoA + H(+) = 3-oxobutanoyl-[ACP] + CO2 + CoA. It functions in the pathway lipid metabolism; fatty acid biosynthesis. Its function is as follows. Catalyzes the condensation reaction of fatty acid synthesis by the addition to an acyl acceptor of two carbons from malonyl-ACP. Catalyzes the first condensation reaction which initiates fatty acid synthesis and may therefore play a role in governing the total rate of fatty acid production. Possesses both acetoacetyl-ACP synthase and acetyl transacylase activities. Its substrate specificity determines the biosynthesis of branched-chain and/or straight-chain of fatty acids. The protein is Beta-ketoacyl-[acyl-carrier-protein] synthase III of Thiobacillus denitrificans (strain ATCC 25259 / T1).